We begin with the raw amino-acid sequence, 260 residues long: Small ribosomal subunit protein uS2 (260 aa).

The interval 240-260 is disordered; that stretch reads VLKPKLPYQPNRRPYQETVKK.

Belongs to the universal ribosomal protein uS2 family.

The protein is Small ribosomal subunit protein uS2 of Phytoplasma australiense.